A 380-amino-acid polypeptide reads, in one-letter code: GTP-binding protein 10 (380 aa).

The 136-residue stretch at 13-148 folds into the Obg domain; the sequence is GNFVDNVRLY…RNIRLDLKLI (136 aa). Positions 149–344 constitute an OBG-type G domain; that stretch reads ADFGLVGFPN…LKSLIRQSLE (196 aa). GTP is bound by residues 155–162, 202–206, and 278–281; these read GFPNAGKS, DLPGL, and NKMD.

It belongs to the TRAFAC class OBG-HflX-like GTPase superfamily. OBG GTPase family.

It is found in the nucleus. It localises to the nucleolus. Its function is as follows. May be involved in the ribosome maturation process. This Danio rerio (Zebrafish) protein is GTP-binding protein 10 (gtpbp10).